A 378-amino-acid chain; its full sequence is Erythronate-4-phosphate dehydrogenase (378 aa).

Ser45 and Thr66 together coordinate substrate. NAD(+) is bound by residues Asp146 and Thr175. Residue Arg208 is part of the active site. Asp232 contacts NAD(+). Glu237 is a catalytic residue. The active-site Proton donor is His254. Gly257 is a binding site for NAD(+). Tyr258 contributes to the substrate binding site.

Belongs to the D-isomer specific 2-hydroxyacid dehydrogenase family. PdxB subfamily. As to quaternary structure, homodimer.

It localises to the cytoplasm. It catalyses the reaction 4-phospho-D-erythronate + NAD(+) = (R)-3-hydroxy-2-oxo-4-phosphooxybutanoate + NADH + H(+). It participates in cofactor biosynthesis; pyridoxine 5'-phosphate biosynthesis; pyridoxine 5'-phosphate from D-erythrose 4-phosphate: step 2/5. Catalyzes the oxidation of erythronate-4-phosphate to 3-hydroxy-2-oxo-4-phosphonooxybutanoate. In Escherichia coli O127:H6 (strain E2348/69 / EPEC), this protein is Erythronate-4-phosphate dehydrogenase.